We begin with the raw amino-acid sequence, 995 residues long: uncharacterized protein (995 aa).

An N-terminal signal peptide occupies residues 1–30 (MFIHRMKSNLASLFLSFFLLLACEFTFSYA). N-linked (GlcNAc...) asparagine glycans are attached at residues Asn115, Asn162, Asn225, Asn422, Asn478, and Asn486. The active site involves Glu502. Residues Asn546 and Asn611 are each glycosylated (N-linked (GlcNAc...) asparagine). The Proton donor role is filled by Asp669. N-linked (GlcNAc...) asparagine glycosylation is found at Asn670, Asn823, Asn843, and Asn986.

Belongs to the glycosyl hydrolase 31 family.

It localises to the spore wall. This is an uncharacterized protein from Schizosaccharomyces pombe (strain 972 / ATCC 24843) (Fission yeast).